The sequence spans 225 residues: Tryptophan synthase beta chain (225 aa).

Belongs to the TrpB family. As to quaternary structure, tetramer of two alpha and two beta chains. Requires pyridoxal 5'-phosphate as cofactor.

It carries out the reaction (1S,2R)-1-C-(indol-3-yl)glycerol 3-phosphate + L-serine = D-glyceraldehyde 3-phosphate + L-tryptophan + H2O. It functions in the pathway amino-acid biosynthesis; L-tryptophan biosynthesis; L-tryptophan from chorismate: step 5/5. Functionally, the beta subunit is responsible for the synthesis of L-tryptophan from indole and L-serine. In Buchnera aphidicola subsp. Rhopalosiphum padi, this protein is Tryptophan synthase beta chain (trpB).